The sequence spans 279 residues: Biotin synthase (279 aa).

A Radical SAM core domain is found at 2-232 (VRNSRLDICS…NVTIKIAAGR (231 aa)). Residues C20, C24, and C27 each contribute to the [4Fe-4S] cluster site. [2Fe-2S] cluster contacts are provided by C96, C156, and K227.

The protein belongs to the radical SAM superfamily. Biotin synthase family. Homodimer. [4Fe-4S] cluster serves as cofactor. It depends on [2Fe-2S] cluster as a cofactor.

The catalysed reaction is (4R,5S)-dethiobiotin + (sulfur carrier)-SH + 2 reduced [2Fe-2S]-[ferredoxin] + 2 S-adenosyl-L-methionine = (sulfur carrier)-H + biotin + 2 5'-deoxyadenosine + 2 L-methionine + 2 oxidized [2Fe-2S]-[ferredoxin]. The protein operates within cofactor biosynthesis; biotin biosynthesis; biotin from 7,8-diaminononanoate: step 2/2. Catalyzes the conversion of dethiobiotin (DTB) to biotin by the insertion of a sulfur atom into dethiobiotin via a radical-based mechanism. The chain is Biotin synthase from Thermotoga neapolitana (strain ATCC 49049 / DSM 4359 / NBRC 107923 / NS-E).